The primary structure comprises 319 residues: Annexin D4 (319 aa).

Annexin repeat units follow at residues 1 to 75 (MALP…EFSR) and 86 to 157 (HPWE…GLVS). 3 residues coordinate Ca(2+): Gly19, Gly21, and Glu72. Thr115 carries the phosphothreonine modification. Phosphotyrosine occurs at positions 159 and 211. Annexin repeat units lie at residues 169 to 240 (DSAK…ICLL) and 241 to 316 (KPAL…TLLS). Ser277 is modified (phosphoserine). Tyr287 bears the Phosphotyrosine mark.

It belongs to the annexin (TC 1.A.31.1) family. Expressed mainly in roots and flowers. Lower in stems and leaves.

In terms of biological role, may be involved in osmotic stress and abscisic acid signaling in a calcium-dependent manner. In Arabidopsis thaliana (Mouse-ear cress), this protein is Annexin D4 (ANN4).